The following is a 187-amino-acid chain: dTTP/UTP pyrophosphatase (187 aa).

The Proton acceptor role is filled by Asp-72.

This sequence belongs to the Maf family. YhdE subfamily. Requires a divalent metal cation as cofactor.

It localises to the cytoplasm. It catalyses the reaction dTTP + H2O = dTMP + diphosphate + H(+). It carries out the reaction UTP + H2O = UMP + diphosphate + H(+). Its function is as follows. Nucleoside triphosphate pyrophosphatase that hydrolyzes dTTP and UTP. May have a dual role in cell division arrest and in preventing the incorporation of modified nucleotides into cellular nucleic acids. The protein is dTTP/UTP pyrophosphatase of Vibrio cholerae serotype O1 (strain ATCC 39315 / El Tor Inaba N16961).